Reading from the N-terminus, the 476-residue chain is Bifunctional protein HldE (476 aa).

A ribokinase region spans residues 1-318; sequence MKPVLPDYSK…AEAVHGSKDT (318 aa). Position 195 to 198 (195 to 198) interacts with ATP; it reads NMSE. Aspartate 264 is an active-site residue. Residues 344 to 476 form a cytidylyltransferase region; that stretch reads MTNGCFDILH…IIEAIKGGRG (133 aa).

The protein in the N-terminal section; belongs to the carbohydrate kinase PfkB family. This sequence in the C-terminal section; belongs to the cytidylyltransferase family. Homodimer.

The catalysed reaction is D-glycero-beta-D-manno-heptose 7-phosphate + ATP = D-glycero-beta-D-manno-heptose 1,7-bisphosphate + ADP + H(+). The enzyme catalyses D-glycero-beta-D-manno-heptose 1-phosphate + ATP + H(+) = ADP-D-glycero-beta-D-manno-heptose + diphosphate. Its pathway is nucleotide-sugar biosynthesis; ADP-L-glycero-beta-D-manno-heptose biosynthesis; ADP-L-glycero-beta-D-manno-heptose from D-glycero-beta-D-manno-heptose 7-phosphate: step 1/4. The protein operates within nucleotide-sugar biosynthesis; ADP-L-glycero-beta-D-manno-heptose biosynthesis; ADP-L-glycero-beta-D-manno-heptose from D-glycero-beta-D-manno-heptose 7-phosphate: step 3/4. Catalyzes the phosphorylation of D-glycero-D-manno-heptose 7-phosphate at the C-1 position to selectively form D-glycero-beta-D-manno-heptose-1,7-bisphosphate. In terms of biological role, catalyzes the ADP transfer from ATP to D-glycero-beta-D-manno-heptose 1-phosphate, yielding ADP-D-glycero-beta-D-manno-heptose. The polypeptide is Bifunctional protein HldE (Vibrio cholerae serotype O1 (strain ATCC 39541 / Classical Ogawa 395 / O395)).